Reading from the N-terminus, the 425-residue chain is Dihydroorotase (425 aa).

Residues H56 and H58 each contribute to the Zn(2+) site. Residues 58–60 (HWR) and N90 each bind substrate. The Zn(2+) site is built by D147, H174, and H227. A substrate-binding site is contributed by N273. Residue D300 participates in Zn(2+) binding. D300 is a catalytic residue. Substrate contacts are provided by residues H304 and 318 to 319 (FG).

It belongs to the metallo-dependent hydrolases superfamily. DHOase family. Class I DHOase subfamily. Zn(2+) is required as a cofactor.

It catalyses the reaction (S)-dihydroorotate + H2O = N-carbamoyl-L-aspartate + H(+). It functions in the pathway pyrimidine metabolism; UMP biosynthesis via de novo pathway; (S)-dihydroorotate from bicarbonate: step 3/3. Functionally, catalyzes the reversible cyclization of carbamoyl aspartate to dihydroorotate. The chain is Dihydroorotase from Fusobacterium nucleatum subsp. nucleatum (strain ATCC 25586 / DSM 15643 / BCRC 10681 / CIP 101130 / JCM 8532 / KCTC 2640 / LMG 13131 / VPI 4355).